The following is a 405-amino-acid chain: L-carnitine CoA-transferase (405 aa).

2 residues coordinate CoA: lysine 97 and arginine 104. Aspartate 169 serves as the catalytic Nucleophile.

Belongs to the CoA-transferase III family. CaiB subfamily. In terms of assembly, homodimer.

It is found in the cytoplasm. It catalyses the reaction crotonobetainyl-CoA + (R)-carnitine = crotonobetaine + (R)-carnitinyl-CoA. The enzyme catalyses 4-(trimethylamino)butanoyl-CoA + (R)-carnitine = (R)-carnitinyl-CoA + 4-(trimethylamino)butanoate. The protein operates within amine and polyamine metabolism; carnitine metabolism. Its function is as follows. Catalyzes the reversible transfer of the CoA moiety from gamma-butyrobetainyl-CoA to L-carnitine to generate L-carnitinyl-CoA and gamma-butyrobetaine. Is also able to catalyze the reversible transfer of the CoA moiety from gamma-butyrobetainyl-CoA or L-carnitinyl-CoA to crotonobetaine to generate crotonobetainyl-CoA. This Escherichia coli O7:K1 (strain IAI39 / ExPEC) protein is L-carnitine CoA-transferase.